The chain runs to 645 residues: 1-deoxy-D-xylulose-5-phosphate synthase (645 aa).

Thiamine diphosphate is bound by residues His-79 and 120 to 122 (AHS). Mg(2+) is bound at residue Asp-155. Thiamine diphosphate contacts are provided by residues 156 to 157 (GA), Asn-184, Tyr-293, and Glu-375. Residue Asn-184 coordinates Mg(2+).

It belongs to the transketolase family. DXPS subfamily. In terms of assembly, homodimer. Mg(2+) serves as cofactor. It depends on thiamine diphosphate as a cofactor.

The catalysed reaction is D-glyceraldehyde 3-phosphate + pyruvate + H(+) = 1-deoxy-D-xylulose 5-phosphate + CO2. It functions in the pathway metabolic intermediate biosynthesis; 1-deoxy-D-xylulose 5-phosphate biosynthesis; 1-deoxy-D-xylulose 5-phosphate from D-glyceraldehyde 3-phosphate and pyruvate: step 1/1. In terms of biological role, catalyzes the acyloin condensation reaction between C atoms 2 and 3 of pyruvate and glyceraldehyde 3-phosphate to yield 1-deoxy-D-xylulose-5-phosphate (DXP). The chain is 1-deoxy-D-xylulose-5-phosphate synthase from Ruegeria sp. (strain TM1040) (Silicibacter sp.).